A 305-amino-acid polypeptide reads, in one-letter code: UDP-N-acetylenolpyruvoylglucosamine reductase 2 (305 aa).

One can recognise an FAD-binding PCMH-type domain in the interval 33–197 (VGGKADVFVA…LEARFELEEG (165 aa)). The active site involves Arg176. The Proton donor role is filled by Ser226. Glu296 is a catalytic residue.

Belongs to the MurB family. FAD is required as a cofactor.

The protein resides in the cytoplasm. It carries out the reaction UDP-N-acetyl-alpha-D-muramate + NADP(+) = UDP-N-acetyl-3-O-(1-carboxyvinyl)-alpha-D-glucosamine + NADPH + H(+). It functions in the pathway cell wall biogenesis; peptidoglycan biosynthesis. Its function is as follows. Cell wall formation. The chain is UDP-N-acetylenolpyruvoylglucosamine reductase 2 from Bacillus cereus (strain ZK / E33L).